Reading from the N-terminus, the 295-residue chain is Uridine and thymidine phosphorylase (295 aa).

Residues arginine 81 and 125 to 128 contribute to the phosphate site; that span reads RLGT. Glutamine 203 and arginine 205 together coordinate substrate.

Belongs to the PNP/UDP phosphorylase family. In terms of tissue distribution, expressed in hypodermis, pharynx, spermatheca and gonad.

The enzyme catalyses uridine + phosphate = alpha-D-ribose 1-phosphate + uracil. The catalysed reaction is thymidine + phosphate = 2-deoxy-alpha-D-ribose 1-phosphate + thymine. It carries out the reaction 2'-deoxyuridine + phosphate = 2-deoxy-alpha-D-ribose 1-phosphate + uracil. The protein operates within pyrimidine metabolism; UMP biosynthesis via salvage pathway; uracil from uridine (phosphorylase route): step 1/1. It participates in pyrimidine metabolism; dTMP biosynthesis via salvage pathway; dTMP from thymine: step 1/2. Functionally, catalyzes the reversible phosphorylytic cleavage of uridine and thymidine to uracil and ribose-phosphate or thymine and deoxyribose-1-phosphate. The produced molecules are then utilized as carbon and energy sources or in the rescue of pyrimidine bases for nucleotide synthesis. Required for normal lifespan. This is Uridine and thymidine phosphorylase from Caenorhabditis elegans.